The sequence spans 596 residues: MLPRNSHYKGTAYVHGKASGPLIASNLELSFWGGVDPQTSQVIDHHHPLSGEFLQDAILAIPSGRGSCSGSGVLLELLLSGKGPKALIFSRREDILTLGVVVAEEIFGRSIPVVVLAVTDFEELLAARYVAVNGGTVSTVQLGDAMHSPEDDSTEPLDTTLGLSIELSNKDYAFLSGAHGQAAQAAMRIILRMAAMEGARKLIDITQVHIDGCVYTGPASLKFAETLRDWGGKVVTPTTLNSIFVDQRRWRAQGVPSVFGEAAEKLATAYTDMGALPTYTCAPYLLPSAPKRGEQVAWAESNAVVYANSVLGAKTMKYPDFLDICIALTGRAPYGGLHIESNRSASLCVELPVLQKADIDDSFYPLLGYHVGRIAGSRIPVVVGVDVLRPSRDDLKAFGAAFATMASAPMFHIVGVTPEAATLQDAIGRREGVECIRLDVTELQTVWRTLNSAEDNSPVDLISLGNPHFSIAELRRLASLCRGRAKHDKVAVMVTCARATYGLADQAGLIEELHRFGVEVITDTCWCMIGEPVIPTTSRTIMTNSAKYAHYGPGLTGRRFYFGSLARCVDAACDGYFDTKMPGFISSCIPKGAGVR.

S67 (proton acceptor) is an active-site residue.

This sequence belongs to the AcnX family. As to quaternary structure, monomer. Fe(3+) serves as cofactor.

The enzyme catalyses cis-3-hydroxy-L-proline = 1-pyrroline-2-carboxylate + H2O. Its activity is regulated as follows. Inhibited by Zn(2+). Not inhibited by pyrrole-2-carboxylate nor its derivative 2-thiophenecarboxylate. In terms of biological role, catalyzes the dehydration of cis-3-hydroxy-L-proline (c3LHyp) to Delta(1)-pyrroline-2-carboxylate (Pyr2C). No activity with L-proline, trans-4-hydroxy-L-proline (t4LHyp), cis-4-hydroxy-L-proline (c4LHyp), trans-3-hydroxy-L-proline (t3LHyp), D-proline, cis-4-hydroxy-D-proline (c4DHyp), trans-4-hydroxy-D-proline (t4DHyp) or L-serine as substrates. Because of the low catalytic efficiency, C3LHyp is likely not a main physiological substrate of this enzyme in H.jecorina. In Hypocrea jecorina (strain QM6a) (Trichoderma reesei), this protein is Cis-3-hydroxy-L-proline dehydratase.